The following is a 176-amino-acid chain: Flavodoxin (176 aa).

Residues Ile-4 to Lys-172 enclose the Flavodoxin-like domain.

It belongs to the flavodoxin family. FMN serves as cofactor.

Functionally, low-potential electron donor to a number of redox enzymes. NifF is the electron donor to nitrogenase. The sequence is that of Flavodoxin (nifF) from Klebsiella pneumoniae.